The following is a 164-amino-acid chain: Sorting nexin-3 (164 aa).

One can recognise a PX domain in the interval 40-163 (EIEVCNPKTH…VRFIQDPTFQ (124 aa)). A 1,2-diacyl-sn-glycero-3-phospho-(1D-myo-inositol-3-phosphate) contacts are provided by Arg-83, Ser-85, Lys-114, Arg-120, and Arg-129.

The protein belongs to the sorting nexin family.

It localises to the cytoplasm. Its subcellular location is the golgi apparatus membrane. The protein resides in the prevacuolar compartment membrane. In terms of biological role, required for retention of late Golgi membrane proteins. Component of the retrieval machinery that functions by direct interaction with the cytosolic tails of certain TGN membrane proteins during the sorting/budding process at the prevacuolar compartment. Binds phosphatidylinositol 3-phosphate (PtdIns(P3)). In Kluyveromyces lactis (strain ATCC 8585 / CBS 2359 / DSM 70799 / NBRC 1267 / NRRL Y-1140 / WM37) (Yeast), this protein is Sorting nexin-3 (SNX3).